Here is an 80-residue protein sequence, read N- to C-terminus: Raniseptin-8 (80 aa).

The first 22 residues, 1–22 (MAFLKKSLFLVLFLGIVSLSIC), serve as a signal peptide directing secretion. The propeptide occupies 23–49 (EEEKREGEEEEKQEEENEELSEEELRE). The interval 27–46 (REGEEEEKQEEENEELSEEE) is disordered. Residues 30 to 44 (EEEEKQEEENEELSE) show a composition bias toward acidic residues.

It belongs to the frog skin active peptide (FSAP) family. Dermaseptin subfamily. Expressed by the skin glands.

It localises to the secreted. Functionally, has antibacterial activity. The sequence is that of Raniseptin-8 from Boana raniceps (Chaco tree frog).